The chain runs to 477 residues: Trigger factor (477 aa).

In terms of domain architecture, PPIase FKBP-type spans 169–254 (EDRVTIDYLG…VKEVAKPNEL (86 aa)). A disordered region spans residues 435-477 (VSKEELTAEDEDAASEAKPAKKAAAKKKAAPKKKAEEGKSEEA). Residues 454 to 466 (AKKAAAKKKAAPK) are compositionally biased toward basic residues. Over residues 467 to 477 (KKAEEGKSEEA) the composition is skewed to basic and acidic residues.

Belongs to the FKBP-type PPIase family. Tig subfamily.

It localises to the cytoplasm. The enzyme catalyses [protein]-peptidylproline (omega=180) = [protein]-peptidylproline (omega=0). Involved in protein export. Acts as a chaperone by maintaining the newly synthesized protein in an open conformation. Functions as a peptidyl-prolyl cis-trans isomerase. The protein is Trigger factor (tig) of Brucella melitensis biotype 1 (strain ATCC 23456 / CCUG 17765 / NCTC 10094 / 16M).